We begin with the raw amino-acid sequence, 537 residues long: 2-isopropylmalate synthase (537 aa).

In terms of domain architecture, Pyruvate carboxyltransferase spans 8 to 273; it reads IIIFDTTLRD…FLGRPVDSME (266 aa). 4 residues coordinate Mn(2+): Asp-17, His-208, His-210, and Asn-244. The regulatory domain stretch occupies residues 408–537; it reads RLELVQVSCG…PSEPVLTSKN (130 aa).

It belongs to the alpha-IPM synthase/homocitrate synthase family. LeuA type 1 subfamily. Homodimer. Mn(2+) is required as a cofactor.

The protein resides in the cytoplasm. It catalyses the reaction 3-methyl-2-oxobutanoate + acetyl-CoA + H2O = (2S)-2-isopropylmalate + CoA + H(+). It functions in the pathway amino-acid biosynthesis; L-leucine biosynthesis; L-leucine from 3-methyl-2-oxobutanoate: step 1/4. Catalyzes the condensation of the acetyl group of acetyl-CoA with 3-methyl-2-oxobutanoate (2-ketoisovalerate) to form 3-carboxy-3-hydroxy-4-methylpentanoate (2-isopropylmalate). In Crocosphaera subtropica (strain ATCC 51142 / BH68) (Cyanothece sp. (strain ATCC 51142)), this protein is 2-isopropylmalate synthase.